Here is a 190-residue protein sequence, read N- to C-terminus: uncharacterized protein (190 aa).

At 1–16 the chain is on the cytoplasmic side; sequence MAILPEFISQTPPVTR. Residues 17–37 traverse the membrane as a helical segment; that stretch reads YIVLGTLFTTLAVNFGYVSDL. The Lumenal segment spans residues 38 to 55; that stretch reads KIFFNWKLFLAKGEYWRA. A helical membrane pass occupies residues 56 to 76; it reads ITTFLYVGPFGLELILYLSFL. Residues 77–98 lie on the Cytoplasmic side of the membrane; it reads LRFMSMLERSSPPPQTQSFLKT. The helical transmembrane segment at 99 to 119 threads the bilayer; the sequence is VLIVWFSLLVTSYFSYMPFAA. The Lumenal segment spans residues 120–138; the sequence is SYFSFTMLYIWSWKHPLYR. A helical transmembrane segment spans residues 139 to 159; sequence ISILGLFDVKAPYVPWVMVLL. At 160 to 163 the chain is on the cytoplasmic side; that stretch reads RWLR. The helical transmembrane segment at 164–184 threads the bilayer; the sequence is TGIFPLLDLISALIGHVYFFV. At 185 to 190 the chain is on the lumenal side; sequence TDFSTV.

Belongs to the derlin family.

It localises to the endoplasmic reticulum membrane. This is an uncharacterized protein from Schizosaccharomyces pombe (strain 972 / ATCC 24843) (Fission yeast).